A 92-amino-acid chain; its full sequence is Small ribosomal subunit protein uS19 (92 aa).

It belongs to the universal ribosomal protein uS19 family.

Its function is as follows. Protein S19 forms a complex with S13 that binds strongly to the 16S ribosomal RNA. The polypeptide is Small ribosomal subunit protein uS19 (Ruegeria pomeroyi (strain ATCC 700808 / DSM 15171 / DSS-3) (Silicibacter pomeroyi)).